A 299-amino-acid polypeptide reads, in one-letter code: Virginiamycin B lyase (299 aa).

Histidine 229 contacts substrate. Residue glutamate 269 participates in Mg(2+) binding. The active-site Proton acceptor is the histidine 271. Residue glutamate 286 coordinates Mg(2+).

This sequence belongs to the Vgb family. In terms of assembly, monomer. The cofactor is Mg(2+).

Functionally, inactivates the type B streptogramin antibiotics by linearizing the lactone ring at the ester linkage, generating a free phenylglycine carboxylate and converting the threonyl moiety into 2-amino-butenoic acid. This Bordetella parapertussis (strain 12822 / ATCC BAA-587 / NCTC 13253) protein is Virginiamycin B lyase.